We begin with the raw amino-acid sequence, 835 residues long: Ribonucleoside-diphosphate reductase large subunit (835 aa).

Residues S222, S237–C238, G266, N447–E451, and P660–S664 each bind substrate. A disulfide bridge links C238 with C464. The active-site Proton acceptor is N447. C449 serves as the catalytic Cysteine radical intermediate. The Proton acceptor role is filled by E451.

It belongs to the ribonucleoside diphosphate reductase large chain family. Heterotetramer composed of a homodimer of the large subunit (R1) and a homodimer of the small subunit (R2). Larger multisubunit protein complex are also active, composed of (R1)n(R2)n.

The catalysed reaction is a 2'-deoxyribonucleoside 5'-diphosphate + [thioredoxin]-disulfide + H2O = a ribonucleoside 5'-diphosphate + [thioredoxin]-dithiol. In terms of biological role, ribonucleoside-diphosphate reductase holoenzyme provides the precursors necessary for viral DNA synthesis. Allows virus growth in non-dividing cells. Catalyzes the biosynthesis of deoxyribonucleotides from the corresponding ribonucleotides. The protein is Ribonucleoside-diphosphate reductase large subunit of Magallana gigas (Pacific oyster).